The chain runs to 856 residues: V-type proton ATPase 116 kDa subunit a 2 (856 aa).

The Cytoplasmic portion of the chain corresponds to Met-1–Glu-393. The chain crosses the membrane as a helical span at residues Val-394–Phe-412. The Vacuolar portion of the chain corresponds to Gly-413–Asp-414. The chain crosses the membrane as a helical span at residues Phe-415 to Asn-431. Residues Glu-432–Arg-445 are Cytoplasmic-facing. A helical transmembrane segment spans residues Met-446 to Ser-475. Residues Val-476–Ser-549 lie on the Vacuolar side of the membrane. Asn-484 and Asn-505 each carry an N-linked (GlcNAc...) asparagine glycan. A helical transmembrane segment spans residues Phe-550–Leu-569. At Gly-570–Ser-587 the chain is on the cytoplasmic side. A helical transmembrane segment spans residues Ile-588–Lys-608. The Vacuolar segment spans residues Trp-609–Val-651. A helical membrane pass occupies residues Leu-652 to Leu-671. Residues Leu-672 to Ser-739 are Cytoplasmic-facing. Ser-695 and Ser-700 each carry phosphoserine. The chain crosses the membrane as a helical span at residues Ile-740–Ala-764. Residues Gln-765 to Tyr-785 are Vacuolar-facing. Residues Gly-786–Glu-824 traverse the membrane as a helical segment. Over Phe-825–Ala-856 the chain is Cytoplasmic.

The protein belongs to the V-ATPase 116 kDa subunit family. In terms of assembly, V-ATPase is a heteromultimeric enzyme made up of two complexes: the ATP-hydrolytic V1 complex and the proton translocation V0 complex. The V1 complex consists of three catalytic AB heterodimers that form a heterohexamer, three peripheral stalks each consisting of EG heterodimers, one central rotor including subunits D and F, and the regulatory subunits C and H. The proton translocation complex V0 consists of the proton transport subunit a, a ring of proteolipid subunits c9c'', rotary subunit d, subunits e and f, and the accessory subunits ATP6AP1/Ac45 and ATP6AP2/PRR. Directly interacts with PSCD2 through its N-terminal cytosolic tail in an intra-endosomal acidification-dependent manner. Disruption of this interaction results in the inhibition of endocytosis. Interacts with SPAAR.

Its subcellular location is the cell membrane. The protein resides in the endosome membrane. Its function is as follows. Subunit of the V0 complex of vacuolar(H+)-ATPase (V-ATPase), a multisubunit enzyme composed of a peripheral complex (V1) that hydrolyzes ATP and a membrane integral complex (V0) that translocates protons. V-ATPase is responsible for acidifying and maintaining the pH of intracellular compartments and in some cell types, is targeted to the plasma membrane, where it is responsible for acidifying the extracellular environment. Essential component of the endosomal pH-sensing machinery. May play a role in maintaining the Golgi functions, such as glycosylation maturation, by controlling the Golgi pH. In aerobic conditions, involved in intracellular iron homeostasis, thus triggering the activity of Fe(2+) prolyl hydroxylase (PHD) enzymes, and leading to HIF1A hydroxylation and subsequent proteasomal degradation. This chain is V-type proton ATPase 116 kDa subunit a 2 (ATP6V0A2), found in Homo sapiens (Human).